The chain runs to 753 residues: Serine/threonine-protein phosphatase with EF-hands 2 (753 aa).

Residues 21 to 46 (KAAALIQRWYRRYVARLEMRRRCTWS) enclose the IQ domain. Residues 128–540 (ATALVEAFRL…PHIVQYQANK (413 aa)) form a catalytic region. Mn(2+) is bound by residues Asp179, His181, Asp208, and Asn240. The Proton donor role is filled by His241. Mn(2+) is bound at residue His292. 2 disordered regions span residues 318–382 (CKTR…GSLD) and 409–435 (VTGEKEEPSRSASEADSEAGELRKPTQ). The span at 322–333 (QKSEKQMEEKRR) shows a compositional bias: basic and acidic residues. Over residues 348 to 361 (LPESRSLPSSPLRL) the composition is skewed to low complexity. A compositionally biased stretch (polar residues) spans 366 to 377 (AQKTSRSSSIPC). Residue His488 coordinates Mn(2+). EF-hand domains are found at residues 568–603 (AHSSDLLSEFKKHDADKVGLITLSDWAAAVESVLHL), 652–687 (RNRSNLETIFRIIDSDHSGFISLDEFRQTWKLFSSH), and 692–727 (ITDDCICDLARSIDFNKDGHIDINEFLEAFRLVEKS). Residues Asp665, Asp667, Ser669, Glu676, Asp705, Asn707, Asp709, His711, and Glu716 each contribute to the Ca(2+) site. The segment at 732–753 (DASECPQATNAKDSGCSSPGAH) is disordered. Over residues 737–753 (PQATNAKDSGCSSPGAH) the composition is skewed to polar residues.

It belongs to the PPP phosphatase family. Mn(2+) is required as a cofactor. Retinal specific.

The protein resides in the cytoplasm. Its subcellular location is the cell projection. The protein localises to the cilium. It localises to the photoreceptor outer segment. It is found in the photoreceptor inner segment. The catalysed reaction is O-phospho-L-seryl-[protein] + H2O = L-seryl-[protein] + phosphate. The enzyme catalyses O-phospho-L-threonyl-[protein] + H2O = L-threonyl-[protein] + phosphate. Activated by calcium. May play a role in phototransduction. May dephosphorylate photoactivated rhodopsin. May function as a calcium sensing regulator of ionic currents, energy production or synaptic transmission. This is Serine/threonine-protein phosphatase with EF-hands 2 (PPEF2) from Homo sapiens (Human).